The primary structure comprises 856 residues: Inactive rhomboid protein 1 (856 aa).

Positions 1–20 (MSEARRDSTSSLQRKKPPWL) are disordered. Residues 1-412 (MSEARRDSTS…HRPFFTYWLT (412 aa)) are Cytoplasmic-facing. Residues serine 76 and serine 176 each carry the phosphoserine modification. 2 positions are modified to phosphothreonine: threonine 180 and threonine 183. Phosphoserine is present on serine 391. The chain crosses the membrane as a helical span at residues 413–433 (FVHSLVTILAVCIYGIAPVGF). Residues 434-656 (SQHETVDSVL…NPEVPDQFYR (223 aa)) are Lumenal-facing. A glycan (N-linked (GlcNAc...) asparagine) is linked at asparagine 584. Residues 657–677 (LWLSLFLHAGILHCLVSVCFQ) form a helical membrane-spanning segment. The Cytoplasmic portion of the chain corresponds to 678-692 (MTVLRDLEKLAGWHR). The helical transmembrane segment at 693–713 (IAIIYLLSGVTGNLASAIFLP) threads the bilayer. The Lumenal portion of the chain corresponds to 714–715 (YR). Residues 716–736 (AEVGPAGSQFGILACLFVELF) form a helical membrane-spanning segment. Residues 737-747 (QSWQILARPWR) are Cytoplasmic-facing. Residues 748–768 (AFFKLLAVVLFLFAFGLLPWI) traverse the membrane as a helical segment. The Lumenal segment spans residues 769-773 (DNFAH). The chain crosses the membrane as a helical span at residues 774 to 794 (ISGFVSGLFLSFAFLPYISFG). Over 795–804 (KFDLYRKRCQ) the chain is Cytoplasmic. A helical transmembrane segment spans residues 805-825 (IIIFQAVFLGLLAGLVVLFYF). The Lumenal segment spans residues 826-856 (YPVRCEWCEFLTCIPFTDKFCEKYELDAQLH).

This sequence belongs to the peptidase S54 family. Homodimer, or homooligomer. Interacts with TGFA and HBEGF. Interacts with EGF; may retain EGF in the endoplasmic reticulum and regulates its degradation through the endoplasmic reticulum-associated degradation (ERAD). Interacts (via cytoplasmic N-terminus) with FRMD8/iTAP; this interaction leads to mutual protein stabilization. Interacts with ADAM17/TACE.

The protein localises to the endoplasmic reticulum membrane. It localises to the golgi apparatus membrane. Regulates ADAM17 protease, a sheddase of the epidermal growth factor (EGF) receptor ligands and TNF, thereby plays a role in sleep, cell survival, proliferation, migration and inflammation. Does not exhibit any protease activity on its own. In Rattus norvegicus (Rat), this protein is Inactive rhomboid protein 1 (Rhbdf1).